Consider the following 290-residue polypeptide: Arylamine N-acetyltransferase 1 (290 aa).

Position 1 is an N-acetylmethionine (Met-1). Cys-68 acts as the Acyl-thioester intermediate in catalysis. Ser-103 provides a ligand contact to CoA. Substrate is bound at residue 106–107 (IH). Active-site residues include His-107 and Asp-122. The CoA site is built by Tyr-208 and Ser-287.

The protein belongs to the arylamine N-acetyltransferase family.

Its subcellular location is the cytoplasm. The catalysed reaction is an arylamine + acetyl-CoA = an N-acetylarylamine + CoA. In terms of biological role, participates in the detoxification of a plethora of hydrazine and arylamine drugs. This is Arylamine N-acetyltransferase 1 (NAT1) from Mesocricetus auratus (Golden hamster).